We begin with the raw amino-acid sequence, 247 residues long: Small ribosomal subunit protein uS3 (247 aa).

The 69-residue stretch at 38–106 (IRDFLSEGLD…QVQLNILEVK (69 aa)) folds into the KH type-2 domain. Positions 214-226 (SLMNARDERPSRG) are enriched in basic and acidic residues. A disordered region spans residues 214 to 247 (SLMNARDERPSRGRRERPRRGGARRQRAEQKQEG). The span at 227-238 (RRERPRRGGARR) shows a compositional bias: basic residues.

This sequence belongs to the universal ribosomal protein uS3 family. As to quaternary structure, part of the 30S ribosomal subunit. Forms a tight complex with proteins S10 and S14.

Binds the lower part of the 30S subunit head. Binds mRNA in the 70S ribosome, positioning it for translation. In Corynebacterium jeikeium (strain K411), this protein is Small ribosomal subunit protein uS3.